A 569-amino-acid chain; its full sequence is 2-succinyl-5-enolpyruvyl-6-hydroxy-3-cyclohexene-1-carboxylate synthase (569 aa).

It belongs to the TPP enzyme family. MenD subfamily. In terms of assembly, homodimer. The cofactor is Mg(2+). It depends on Mn(2+) as a cofactor. Thiamine diphosphate is required as a cofactor.

The enzyme catalyses isochorismate + 2-oxoglutarate + H(+) = 5-enolpyruvoyl-6-hydroxy-2-succinyl-cyclohex-3-ene-1-carboxylate + CO2. It participates in quinol/quinone metabolism; 1,4-dihydroxy-2-naphthoate biosynthesis; 1,4-dihydroxy-2-naphthoate from chorismate: step 2/7. Its pathway is quinol/quinone metabolism; menaquinone biosynthesis. In terms of biological role, catalyzes the thiamine diphosphate-dependent decarboxylation of 2-oxoglutarate and the subsequent addition of the resulting succinic semialdehyde-thiamine pyrophosphate anion to isochorismate to yield 2-succinyl-5-enolpyruvyl-6-hydroxy-3-cyclohexene-1-carboxylate (SEPHCHC). The chain is 2-succinyl-5-enolpyruvyl-6-hydroxy-3-cyclohexene-1-carboxylate synthase from Shewanella halifaxensis (strain HAW-EB4).